A 220-amino-acid polypeptide reads, in one-letter code: MDFKKFDTPEYEHKRRKLVEILKDEGIKSQKVLNAILKIPRHMFVPQEYLSLSYENEALPIGYGQTISQPYIVALMTEALNLQGNEKVLEIGTGSGYQTAILAELALEIYTVERIKELLEEAKKRLRVLGYNNVYFKLGDGTLGWEEFAPYDRIIVTAASYDIPEPLKEQLKDGGIMVIPIGGRDFQYLYRITKKGDNFYRENLGGVRFVPLKGEYGWKD.

Ser68 is a catalytic residue.

Belongs to the methyltransferase superfamily. L-isoaspartyl/D-aspartyl protein methyltransferase family.

The protein resides in the cytoplasm. It catalyses the reaction [protein]-L-isoaspartate + S-adenosyl-L-methionine = [protein]-L-isoaspartate alpha-methyl ester + S-adenosyl-L-homocysteine. Functionally, catalyzes the methyl esterification of L-isoaspartyl residues in peptides and proteins that result from spontaneous decomposition of normal L-aspartyl and L-asparaginyl residues. It plays a role in the repair and/or degradation of damaged proteins. The chain is Protein-L-isoaspartate O-methyltransferase from Dictyoglomus thermophilum (strain ATCC 35947 / DSM 3960 / H-6-12).